Reading from the N-terminus, the 9159-residue chain is Halomucin (9159 aa).

The signal sequence occupies residues 1–30 (MSQTAKPIFAVVVALIVLISGVAFIGSVSA). 2 consecutive C-type lectin domains span residues 644-776 (TTGN…YLVE) and 929-1060 (YDGH…VEYG). Residues 1310–1332 (QPQTVNDPDAVSTRNNNVGSNGL) are compositionally biased toward polar residues. The disordered stretch occupies residues 1310–1351 (QPQTVNDPDAVSTRNNNVGSNGLDSKIEDDQNNGADGNPHGT). The interval 1756 to 3380 (VGGLIGESSG…GFNGEHVGGL (1625 aa)) is V-G-G-L motif-rich region. Disordered stretches follow at residues 3484-3514 (GATA…PAPQ), 4878-4912 (ESYW…TTPA), 6570-6589 (TDSA…SSGQ), 7047-7097 (TPTV…GINT), 7660-7702 (ATDS…NPGG), 7888-7923 (IDGD…EPAL), 8212-8237 (STQQ…GAAD), and 8369-8614 (DSTA…GSST). The segment covering 3495–3505 (GTPGGATGYGS) has biased composition (gly residues). Over residues 4880–4890 (YWDKGATDKSD) the composition is skewed to basic and acidic residues. Composition is skewed to polar residues over residues 7048-7057 (PTVTINSSSD) and 7068-7078 (GEDSTSSNESS). A compositionally biased stretch (acidic residues) spans 7079–7092 (DGTESDQGDPEDDI). Positions 7681-7698 (VTGSTPTFVSSGTVTTPE) are enriched in polar residues. The 108-residue stretch at 7686-7793 (PTFVSSGTVT…ITDVDEQPTG (108 aa)) folds into the Cadherin domain. Acidic residues-rich tracts occupy residues 7888-7898 (IDGDGLADDNE) and 7905-7920 (DNDD…EDQE). The segment covering 8378–8390 (ALEDDSSNQDSGD) has biased composition (acidic residues). Low complexity-rich tracts occupy residues 8391–8529 (DSSN…SSQN) and 8538–8548 (SAAAVGAESGS). 2 stretches are compositionally biased toward gly residues: residues 8549 to 8566 (EMGG…GDGS) and 8574 to 8608 (AGGG…GSSS).

Probably glycosylated with sugar containing sialic acid. This may further contribute to its overall negative charge, thereby creating an aqueous shield covering the cells.

It is found in the secreted. Its function is as follows. May protect the organism from desiccation stress. May also contribute to the rigidity and maintenance of the unique square cell morphology of H.walsbyi. In Haloquadratum walsbyi (strain DSM 16790 / HBSQ001), this protein is Halomucin (hmu).